The sequence spans 252 residues: 5'-nucleotidase SurE (252 aa).

A divalent metal cation is bound by residues D8, D9, S39, and N91.

This sequence belongs to the SurE nucleotidase family. A divalent metal cation is required as a cofactor.

It is found in the cytoplasm. It carries out the reaction a ribonucleoside 5'-phosphate + H2O = a ribonucleoside + phosphate. Its function is as follows. Nucleotidase that shows phosphatase activity on nucleoside 5'-monophosphates. This chain is 5'-nucleotidase SurE, found in Geobacter metallireducens (strain ATCC 53774 / DSM 7210 / GS-15).